Here is a 629-residue protein sequence, read N- to C-terminus: ATP-dependent DNA helicase II subunit 2 (629 aa).

The region spanning 254 to 476 (SGLNRKTAVE…GHQIDELMEQ (223 aa)) is the Ku domain. The segment covering 608–620 (DLETLLKRGEQHS) has biased composition (basic and acidic residues). The disordered stretch occupies residues 608–629 (DLETLLKRGEQHSRGSPNNSNN).

This sequence belongs to the ku80 family. Heterodimer of YKU70/HDF1 and YKU80/HDF2. Interacts with SIR4.

It localises to the nucleus. The protein localises to the chromosome. The protein resides in the telomere. The catalysed reaction is ATP + H2O = ADP + phosphate + H(+). In terms of biological role, single-stranded DNA-dependent ATP-dependent helicase. Involved in non-homologous end joining (NHEJ) DNA double strand break repair. DNA-binding is sequence-independent but has a high affinity to nicks in double-stranded DNA and to the ends of duplex DNA. Binds to naturally occurring chromosomal ends, and therefore provides chromosomal end protection. Appears to have a role in recruitment of telomerase and CDC13 to the telomere and the subsequent telomere elongation. Required also for telomere recombination to repair telomeric ends in the absence of telomerase. KU70, of the KU70/KU80 heterodimer, binds to the stem loop of TLC1, the RNA component of telomerase. Involved in telomere maintenance. Interacts with telomeric repeats and subtelomeric sequences thereby controlling telomere length and protecting against subtelomeric rearrangement. Maintains telomeric chromatin, which is involved in silencing the expression of genes located at the telomere. Required for mating-type switching. The polypeptide is ATP-dependent DNA helicase II subunit 2 (YKU80) (Saccharomyces cerevisiae (strain ATCC 204508 / S288c) (Baker's yeast)).